Reading from the N-terminus, the 214-residue chain is Thiamine import ATP-binding protein ThiQ (214 aa).

Positions 2–212 (IKLNTIFDYP…KNGQATEREI (211 aa)) constitute an ABC transporter domain. 31 to 38 (GESGAGKS) is an ATP binding site.

This sequence belongs to the ABC transporter superfamily. Thiamine importer (TC 3.A.1.19.1) family. In terms of assembly, the complex is composed of two ATP-binding proteins (ThiQ), two transmembrane proteins (ThiP) and a solute-binding protein (ThiB).

The protein localises to the cell inner membrane. The catalysed reaction is thiamine(out) + ATP + H2O = thiamine(in) + ADP + phosphate + H(+). Part of the ABC transporter complex ThiBPQ involved in thiamine import. Responsible for energy coupling to the transport system. The protein is Thiamine import ATP-binding protein ThiQ of Histophilus somni (strain 129Pt) (Haemophilus somnus).